Here is a 224-residue protein sequence, read N- to C-terminus: 7-cyano-7-deazaguanine synthase (224 aa).

10–20 serves as a coordination point for ATP; the sequence is FSGGQDSTTCL. Zn(2+)-binding residues include Cys-193, Cys-201, Cys-204, and Cys-207.

This sequence belongs to the QueC family. It depends on Zn(2+) as a cofactor.

It catalyses the reaction 7-carboxy-7-deazaguanine + NH4(+) + ATP = 7-cyano-7-deazaguanine + ADP + phosphate + H2O + H(+). Its pathway is purine metabolism; 7-cyano-7-deazaguanine biosynthesis. In terms of biological role, catalyzes the ATP-dependent conversion of 7-carboxy-7-deazaguanine (CDG) to 7-cyano-7-deazaguanine (preQ(0)). In Neisseria gonorrhoeae (strain ATCC 700825 / FA 1090), this protein is 7-cyano-7-deazaguanine synthase.